The following is a 451-amino-acid chain: Exodeoxyribonuclease 7 large subunit (451 aa).

Belongs to the XseA family. As to quaternary structure, heterooligomer composed of large and small subunits.

The protein resides in the cytoplasm. The enzyme catalyses Exonucleolytic cleavage in either 5'- to 3'- or 3'- to 5'-direction to yield nucleoside 5'-phosphates.. In terms of biological role, bidirectionally degrades single-stranded DNA into large acid-insoluble oligonucleotides, which are then degraded further into small acid-soluble oligonucleotides. The chain is Exodeoxyribonuclease 7 large subunit from Neisseria meningitidis serogroup A / serotype 4A (strain DSM 15465 / Z2491).